The sequence spans 1246 residues: Respiratory nitrate reductase 2 alpha chain (1246 aa).

One can recognise a 4Fe-4S Mo/W bis-MGD-type domain in the interval 43-107 (DKIVRSTHGV…SYSWYLYSAN (65 aa)). His-50, Cys-54, Cys-58, and Cys-93 together coordinate [4Fe-4S] cluster. Asp-223 is a binding site for Mo-bis(molybdopterin guanine dinucleotide).

The protein belongs to the prokaryotic molybdopterin-containing oxidoreductase family. In terms of assembly, tetramer composed of an alpha, a beta and 2 gamma chains. Alpha and beta are catalytic chains; gamma chain is involved in binding the enzyme complex to the cytoplasmic membrane. It depends on [4Fe-4S] cluster as a cofactor. Requires Mo-bis(molybdopterin guanine dinucleotide) as cofactor.

The protein localises to the cell membrane. The catalysed reaction is nitrate + a quinol = a quinone + nitrite + H2O. Its function is as follows. This is a second nitrate reductase enzyme which can substitute for the NRA enzyme and allows E.coli to use nitrate as an electron acceptor during anaerobic growth. The alpha chain is the actual site of nitrate reduction. The chain is Respiratory nitrate reductase 2 alpha chain (narZ) from Escherichia coli (strain K12).